Reading from the N-terminus, the 379-residue chain is Putative 2-hydroxyacid dehydrogenase YGL185C (379 aa).

Residues 207–208, 291–293, and D317 each bind NAD(+); these read SI and LGR. The active site involves R293. The active site involves E322. H341 (proton donor) is an active-site residue. 341-344 serves as a coordination point for NAD(+); it reads HLGS.

The protein belongs to the D-isomer specific 2-hydroxyacid dehydrogenase family.

The polypeptide is Putative 2-hydroxyacid dehydrogenase YGL185C (Saccharomyces cerevisiae (strain ATCC 204508 / S288c) (Baker's yeast)).